The sequence spans 295 residues: Probable alpha-L-glutamate ligase 1 (295 aa).

The ATP-grasp domain occupies 104 to 287; the sequence is MQLLSRKGIG…VANAIIEFIE (184 aa). ATP is bound by residues lysine 141, 178-179, aspartate 187, and 211-213; these read EY and RSN. Mg(2+)-binding residues include aspartate 248, glutamate 260, and asparagine 262. 3 residues coordinate Mn(2+): aspartate 248, glutamate 260, and asparagine 262.

This sequence belongs to the RimK family. The cofactor is Mg(2+). It depends on Mn(2+) as a cofactor.

This chain is Probable alpha-L-glutamate ligase 1, found in Shewanella denitrificans (strain OS217 / ATCC BAA-1090 / DSM 15013).